Consider the following 246-residue polypeptide: 23S rRNA (guanosine-2'-O-)-methyltransferase RlmB (246 aa).

Residues G198, I218, and L227 each contribute to the S-adenosyl-L-methionine site.

This sequence belongs to the class IV-like SAM-binding methyltransferase superfamily. RNA methyltransferase TrmH family. RlmB subfamily.

It localises to the cytoplasm. The catalysed reaction is guanosine(2251) in 23S rRNA + S-adenosyl-L-methionine = 2'-O-methylguanosine(2251) in 23S rRNA + S-adenosyl-L-homocysteine + H(+). In terms of biological role, specifically methylates the ribose of guanosine 2251 in 23S rRNA. The polypeptide is 23S rRNA (guanosine-2'-O-)-methyltransferase RlmB (Shewanella oneidensis (strain ATCC 700550 / JCM 31522 / CIP 106686 / LMG 19005 / NCIMB 14063 / MR-1)).